Here is a 539-residue protein sequence, read N- to C-terminus: Glutathione synthetase, chloroplastic (539 aa).

Residues 1 to 61 (MGSGCSSLSY…SPLRCGRSFK (61 aa)) constitute a chloroplast transit peptide. Arg-193 contacts substrate. Residue Glu-209 participates in ATP binding. Mg(2+) contacts are provided by Glu-209 and Asn-211. Substrate-binding positions include 213–216 (ISCS), 281–283 (ERN), Gln-287, and 335–338 (RSGY). Residues Lys-374, 428-437 (KPQREGGGNN), Tyr-439, 464-467 (MQRI), and Glu-490 each bind ATP. Mg(2+) is bound at residue Glu-432. Arg-515 is a binding site for substrate. Lys-517 and Glu-523 together coordinate ATP. 526–527 (VA) is a substrate binding site.

The protein belongs to the eukaryotic GSH synthase family. Homodimer. The cofactor is Mg(2+).

The protein resides in the plastid. It localises to the chloroplast. The catalysed reaction is gamma-L-glutamyl-L-cysteine + glycine + ATP = glutathione + ADP + phosphate + H(+). The protein operates within sulfur metabolism; glutathione biosynthesis; glutathione from L-cysteine and L-glutamate: step 2/2. This is Glutathione synthetase, chloroplastic (GSH2) from Arabidopsis thaliana (Mouse-ear cress).